The chain runs to 264 residues: uncharacterized protein (264 aa).

Residues His-7, His-9, Glu-102, His-138, His-163, and Asp-213 each contribute to the a divalent metal cation site.

The protein belongs to the metallo-dependent hydrolases superfamily. TatD-type hydrolase family. It depends on a divalent metal cation as a cofactor.

This is an uncharacterized protein from Buchnera aphidicola subsp. Acyrthosiphon pisum (strain APS) (Acyrthosiphon pisum symbiotic bacterium).